A 485-amino-acid chain; its full sequence is Glutamate--tRNA ligase (485 aa).

A 'HIGH' region motif is present at residues 11–21; it reads PSPTGHLHIGN. A 'KMSKS' region motif is present at residues 252–256; sequence KLSKR. Lysine 255 lines the ATP pocket.

This sequence belongs to the class-I aminoacyl-tRNA synthetase family. Glutamate--tRNA ligase type 1 subfamily. In terms of assembly, monomer.

The protein localises to the cytoplasm. The catalysed reaction is tRNA(Glu) + L-glutamate + ATP = L-glutamyl-tRNA(Glu) + AMP + diphosphate. Functionally, catalyzes the attachment of glutamate to tRNA(Glu) in a two-step reaction: glutamate is first activated by ATP to form Glu-AMP and then transferred to the acceptor end of tRNA(Glu). The sequence is that of Glutamate--tRNA ligase from Bacillus cereus (strain ATCC 10987 / NRS 248).